Consider the following 355-residue polypeptide: Ferrochelatase (355 aa).

Fe cation contacts are provided by His214 and Glu295.

The protein belongs to the ferrochelatase family.

Its subcellular location is the cytoplasm. The enzyme catalyses heme b + 2 H(+) = protoporphyrin IX + Fe(2+). Its pathway is porphyrin-containing compound metabolism; protoheme biosynthesis; protoheme from protoporphyrin-IX: step 1/1. Functionally, catalyzes the ferrous insertion into protoporphyrin IX. This chain is Ferrochelatase, found in Burkholderia thailandensis (strain ATCC 700388 / DSM 13276 / CCUG 48851 / CIP 106301 / E264).